The primary structure comprises 691 residues: DNA ligase (691 aa).

Residues 41–45 (DAEYD), 90–91 (SL), and Glu130 each bind NAD(+). Lys132 serves as the catalytic N6-AMP-lysine intermediate. NAD(+) is bound by residues Arg153, Glu190, Lys307, and Lys331. Zn(2+)-binding residues include Cys425, Cys428, Cys443, and Cys449. One can recognise a BRCT domain in the interval 610–691 (APQGVLAGKT…LHQLLEGNTR (82 aa)).

This sequence belongs to the NAD-dependent DNA ligase family. LigA subfamily. It depends on Mg(2+) as a cofactor. The cofactor is Mn(2+).

It catalyses the reaction NAD(+) + (deoxyribonucleotide)n-3'-hydroxyl + 5'-phospho-(deoxyribonucleotide)m = (deoxyribonucleotide)n+m + AMP + beta-nicotinamide D-nucleotide.. Functionally, DNA ligase that catalyzes the formation of phosphodiester linkages between 5'-phosphoryl and 3'-hydroxyl groups in double-stranded DNA using NAD as a coenzyme and as the energy source for the reaction. It is essential for DNA replication and repair of damaged DNA. The sequence is that of DNA ligase from Burkholderia multivorans (strain ATCC 17616 / 249).